Reading from the N-terminus, the 67-residue chain is uncharacterized protein (67 aa).

This is an uncharacterized protein from Archaeoglobus fulgidus (strain ATCC 49558 / DSM 4304 / JCM 9628 / NBRC 100126 / VC-16).